Here is a 335-residue protein sequence, read N- to C-terminus: Holliday junction branch migration complex subunit RuvB (335 aa).

Positions 4 to 184 (ADRLIDATEK…FGIVQRLEFY (181 aa)) are large ATPase domain (RuvB-L). Residues I23, R24, G65, K68, T69, T70, 131–133 (EDY), R174, Y184, and R221 each bind ATP. T69 is a binding site for Mg(2+). Residues 185–255 (SVEDLSYIVG…VAELALNMID (71 aa)) are small ATPAse domain (RuvB-S). The interval 258–335 (KSGFDYMDRK…HHFGLLPKQD (78 aa)) is head domain (RuvB-H). The DNA site is built by R313 and R318.

It belongs to the RuvB family. In terms of assembly, homohexamer. Forms an RuvA(8)-RuvB(12)-Holliday junction (HJ) complex. HJ DNA is sandwiched between 2 RuvA tetramers; dsDNA enters through RuvA and exits via RuvB. An RuvB hexamer assembles on each DNA strand where it exits the tetramer. Each RuvB hexamer is contacted by two RuvA subunits (via domain III) on 2 adjacent RuvB subunits; this complex drives branch migration. In the full resolvosome a probable DNA-RuvA(4)-RuvB(12)-RuvC(2) complex forms which resolves the HJ.

It localises to the cytoplasm. It carries out the reaction ATP + H2O = ADP + phosphate + H(+). Functionally, the RuvA-RuvB-RuvC complex processes Holliday junction (HJ) DNA during genetic recombination and DNA repair, while the RuvA-RuvB complex plays an important role in the rescue of blocked DNA replication forks via replication fork reversal (RFR). RuvA specifically binds to HJ cruciform DNA, conferring on it an open structure. The RuvB hexamer acts as an ATP-dependent pump, pulling dsDNA into and through the RuvAB complex. RuvB forms 2 homohexamers on either side of HJ DNA bound by 1 or 2 RuvA tetramers; 4 subunits per hexamer contact DNA at a time. Coordinated motions by a converter formed by DNA-disengaged RuvB subunits stimulates ATP hydrolysis and nucleotide exchange. Immobilization of the converter enables RuvB to convert the ATP-contained energy into a lever motion, pulling 2 nucleotides of DNA out of the RuvA tetramer per ATP hydrolyzed, thus driving DNA branch migration. The RuvB motors rotate together with the DNA substrate, which together with the progressing nucleotide cycle form the mechanistic basis for DNA recombination by continuous HJ branch migration. Branch migration allows RuvC to scan DNA until it finds its consensus sequence, where it cleaves and resolves cruciform DNA. In Pseudoalteromonas translucida (strain TAC 125), this protein is Holliday junction branch migration complex subunit RuvB.